Reading from the N-terminus, the 216-residue chain is Fibroblast growth factor 17 (216 aa).

An N-terminal signal peptide occupies residues 1-22 (MGAARLLPNLTLCLQLLILCCQ). Asn137 carries N-linked (GlcNAc...) asparagine glycosylation. The disordered stretch occupies residues 195 to 216 (FEFVGSAPTRRTKRTRRPQSQT). Basic residues predominate over residues 204-216 (RRTKRTRRPQSQT).

Belongs to the heparin-binding growth factors family. In terms of assembly, interacts with FGFR3 and FGFR4.

The protein resides in the secreted. Its function is as follows. Plays an important role in the regulation of embryonic development and as signaling molecule in the induction and patterning of the embryonic brain. Required for normal brain development. The polypeptide is Fibroblast growth factor 17 (Fgf17) (Mus musculus (Mouse)).